A 429-amino-acid polypeptide reads, in one-letter code: Adenylosuccinate synthetase (429 aa).

GTP is bound by residues 13 to 19 and 41 to 43; these read GDEGKGK and GHT. D14 serves as the catalytic Proton acceptor. The Mg(2+) site is built by D14 and G41. Residues 14 to 17, 39 to 42, T130, R144, Q225, T240, and R304 contribute to the IMP site; these read DEGK and NAGH. H42 functions as the Proton donor in the catalytic mechanism. 300 to 306 serves as a coordination point for substrate; the sequence is ATTGRAR. GTP-binding positions include R306, 332 to 334, and 413 to 415; these read KLD and STG.

Belongs to the adenylosuccinate synthetase family. Homodimer. It depends on Mg(2+) as a cofactor.

The protein resides in the cytoplasm. It carries out the reaction IMP + L-aspartate + GTP = N(6)-(1,2-dicarboxyethyl)-AMP + GDP + phosphate + 2 H(+). It functions in the pathway purine metabolism; AMP biosynthesis via de novo pathway; AMP from IMP: step 1/2. Its function is as follows. Plays an important role in the de novo pathway of purine nucleotide biosynthesis. Catalyzes the first committed step in the biosynthesis of AMP from IMP. The chain is Adenylosuccinate synthetase from Pseudomonas fluorescens (strain Pf0-1).